The primary structure comprises 624 residues: Chaperone protein HtpG (624 aa).

The a; substrate-binding stretch occupies residues 1–336 (MSMKGQETRG…SNDLPLNVSR (336 aa)). The b stretch occupies residues 337-552 (EILQDSRVTQ…ADEMSTQMAK (216 aa)). The interval 553-624 (LFAAAGQQAP…IRRMNQLLTA (72 aa)) is c.

This sequence belongs to the heat shock protein 90 family. As to quaternary structure, homodimer.

The protein resides in the cytoplasm. Its function is as follows. Molecular chaperone. Has ATPase activity. This Yersinia enterocolitica serotype O:8 / biotype 1B (strain NCTC 13174 / 8081) protein is Chaperone protein HtpG.